The chain runs to 419 residues: Ubiquitin-like modifier-activating enzyme 5 (419 aa).

Residues 18–47 (NRLGNVKKDHPLESSSNSKPTHQPKSPAPY) are disordered. Residues 30–41 (ESSSNSKPTHQP) are compositionally biased toward polar residues. 5 residues coordinate ATP: G94, D115, K138, N161, and N194. Positions 236 and 239 each coordinate Zn(2+). C260 functions as the Glycyl thioester intermediate in the catalytic mechanism. 2 residues coordinate Zn(2+): C313 and C318.

It belongs to the ubiquitin-activating E1 family. UBA5 subfamily. In terms of assembly, interacts with ufc-1. As to expression, expressed in the intestine.

Functionally, E1-like enzyme which activates ufm-1. Required for interaction between ufm-1 and ufc-1. In Caenorhabditis elegans, this protein is Ubiquitin-like modifier-activating enzyme 5.